A 312-amino-acid chain; its full sequence is uncharacterized protein (312 aa).

The region spanning 8 to 65 (PGLTCFEIFLAIAEAGSLGGAARELGLTQQAVSRRLASMEAQIGVRLAIRTTRGSQLT) is the HTH lysR-type domain. A DNA-binding region (H-T-H motif) is located at residues 25–45 (LGGAARELGLTQQAVSRRLAS).

This sequence belongs to the LysR transcriptional regulatory family.

This is an uncharacterized protein from Mycobacterium tuberculosis (strain CDC 1551 / Oshkosh).